The sequence spans 309 residues: uncharacterized protein (309 aa).

A signal peptide (tat-type signal) is located at residues 1–32 (MTGTAPVSRRQYLGTAGAIIGTTAGCLTGADA).

It belongs to the bacterial solute-binding protein 1 family. WtpA subfamily. Predicted to be exported by the Tat system. The position of the signal peptide cleavage has not been experimentally proven.

This is an uncharacterized protein from Halobacterium salinarum (strain ATCC 700922 / JCM 11081 / NRC-1) (Halobacterium halobium).